We begin with the raw amino-acid sequence, 202 residues long: Amelogenin (202 aa).

S16 is subject to Phosphoserine. Positions 77 to 202 (QPAPPQQPVM…TDKTKREEVD (126 aa)) are disordered. Pro residues predominate over residues 78-87 (PAPPQQPVMP). Residues 101 to 112 (QPNLPQPGQQPY) are compositionally biased toward low complexity. A compositionally biased stretch (pro residues) spans 113–125 (QPQPAQQPQPHQP). Low complexity predominate over residues 126-158 (IQPIQPIQPIQPMQPMQPMQPMQPMQPMQPQTP). Residues 164-176 (PLPPQPPLPPMFP) are compositionally biased toward pro residues.

Belongs to the amelogenin family.

It is found in the secreted. Its subcellular location is the extracellular space. The protein resides in the extracellular matrix. In terms of biological role, plays a role in the biomineralization of teeth. Seems to regulate the formation of crystallites during the secretory stage of tooth enamel development. Thought to play a major role in the structural organization and mineralization of developing enamel. The sequence is that of Amelogenin (AMEL) from Monodelphis domestica (Gray short-tailed opossum).